Reading from the N-terminus, the 265-residue chain is Hemin import ATP-binding protein HmuV (265 aa).

The ABC transporter domain maps to 10–247; the sequence is LVARHLRFQT…ETLAHWYRAD (238 aa). 42 to 49 is a binding site for ATP; sequence GPNGAGKS.

This sequence belongs to the ABC transporter superfamily. Heme (hemin) importer (TC 3.A.1.14.5) family. In terms of assembly, the complex is composed of two ATP-binding proteins (HmuV), two transmembrane proteins (HmuU) and a solute-binding protein (HmuT).

Its subcellular location is the cell inner membrane. Part of the ABC transporter complex HmuTUV involved in hemin import. Responsible for energy coupling to the transport system. This Pectobacterium atrosepticum (strain SCRI 1043 / ATCC BAA-672) (Erwinia carotovora subsp. atroseptica) protein is Hemin import ATP-binding protein HmuV.